Consider the following 156-residue polypeptide: ATP synthase subunit b (156 aa).

A helical transmembrane segment spans residues 7-27 (IFFQMLVFFVLGWFTMKFVWP).

The protein belongs to the ATPase B chain family. As to quaternary structure, F-type ATPases have 2 components, F(1) - the catalytic core - and F(0) - the membrane proton channel. F(1) has five subunits: alpha(3), beta(3), gamma(1), delta(1), epsilon(1). F(0) has three main subunits: a(1), b(2) and c(10-14). The alpha and beta chains form an alternating ring which encloses part of the gamma chain. F(1) is attached to F(0) by a central stalk formed by the gamma and epsilon chains, while a peripheral stalk is formed by the delta and b chains.

The protein resides in the cell inner membrane. Functionally, f(1)F(0) ATP synthase produces ATP from ADP in the presence of a proton or sodium gradient. F-type ATPases consist of two structural domains, F(1) containing the extramembraneous catalytic core and F(0) containing the membrane proton channel, linked together by a central stalk and a peripheral stalk. During catalysis, ATP synthesis in the catalytic domain of F(1) is coupled via a rotary mechanism of the central stalk subunits to proton translocation. Its function is as follows. Component of the F(0) channel, it forms part of the peripheral stalk, linking F(1) to F(0). The sequence is that of ATP synthase subunit b from Bordetella bronchiseptica (strain ATCC BAA-588 / NCTC 13252 / RB50) (Alcaligenes bronchisepticus).